A 634-amino-acid chain; its full sequence is DNA-directed RNA polymerase subunit gamma (634 aa).

The Zn(2+) site is built by C74, C76, C89, and C92. The Mg(2+) site is built by D471, D473, and D475.

Belongs to the RNA polymerase beta' chain family. RpoC1 subfamily. As to quaternary structure, in cyanobacteria the RNAP catalytic core is composed of 2 alpha, 1 beta, 1 beta', 1 gamma and 1 omega subunit. When a sigma factor is associated with the core the holoenzyme is formed, which can initiate transcription. Mg(2+) is required as a cofactor. The cofactor is Zn(2+).

The catalysed reaction is RNA(n) + a ribonucleoside 5'-triphosphate = RNA(n+1) + diphosphate. Functionally, DNA-dependent RNA polymerase catalyzes the transcription of DNA into RNA using the four ribonucleoside triphosphates as substrates. The sequence is that of DNA-directed RNA polymerase subunit gamma from Prochlorococcus marinus (strain SARG / CCMP1375 / SS120).